The chain runs to 395 residues: Dihydrolipoyllysine-residue succinyltransferase component of 2-oxoglutarate dehydrogenase complex (395 aa).

The Lipoyl-binding domain maps to 2–77 (RVKIIVPSLG…AVGEEIGEIN (76 aa)). At Lys43 the chain carries N6-lipoyllysine. The 38-residue stretch at 111 to 148 (TLAPSVQKLVTENKLDPNNIKGTGRDGRITKGDVLATI) folds into the Peripheral subunit-binding (PSBD) domain. Residues His366 and Asp370 contribute to the active site.

This sequence belongs to the 2-oxoacid dehydrogenase family. In terms of assembly, forms a 24-polypeptide structural core with octahedral symmetry. Part of the 2-oxoglutarate dehydrogenase (OGDH) complex composed of E1 (2-oxoglutarate dehydrogenase), E2 (dihydrolipoamide succinyltransferase) and E3 (dihydrolipoamide dehydrogenase); the complex contains multiple copies of the three enzymatic components (E1, E2 and E3). Requires (R)-lipoate as cofactor.

It carries out the reaction N(6)-[(R)-dihydrolipoyl]-L-lysyl-[protein] + succinyl-CoA = N(6)-[(R)-S(8)-succinyldihydrolipoyl]-L-lysyl-[protein] + CoA. The protein operates within amino-acid degradation; L-lysine degradation via saccharopine pathway; glutaryl-CoA from L-lysine: step 6/6. Its function is as follows. E2 component of the 2-oxoglutarate dehydrogenase (OGDH) complex which catalyzes the second step in the conversion of 2-oxoglutarate to succinyl-CoA and CO(2). In Rickettsia conorii (strain ATCC VR-613 / Malish 7), this protein is Dihydrolipoyllysine-residue succinyltransferase component of 2-oxoglutarate dehydrogenase complex (sucB).